We begin with the raw amino-acid sequence, 311 residues long: p-hydroxybenzoic acid efflux pump subunit AaeA (311 aa).

The helical transmembrane segment at 11–31 (VGITVLVVVLAVIAIFNVWAF) threads the bilayer.

It belongs to the membrane fusion protein (MFP) (TC 8.A.1) family.

The protein localises to the cell inner membrane. Forms an efflux pump with AaeB. This is p-hydroxybenzoic acid efflux pump subunit AaeA from Yersinia pestis bv. Antiqua (strain Antiqua).